Consider the following 247-residue polypeptide: Malonyl-[acyl-carrier protein] O-methyltransferase (247 aa).

It belongs to the methyltransferase superfamily.

It carries out the reaction malonyl-[ACP] + S-adenosyl-L-methionine = malonyl-[ACP] methyl ester + S-adenosyl-L-homocysteine. It functions in the pathway cofactor biosynthesis; biotin biosynthesis. Converts the free carboxyl group of a malonyl-thioester to its methyl ester by transfer of a methyl group from S-adenosyl-L-methionine (SAM). It allows to synthesize pimeloyl-ACP via the fatty acid synthetic pathway. The chain is Malonyl-[acyl-carrier protein] O-methyltransferase from Buchnera aphidicola subsp. Baizongia pistaciae (strain Bp).